We begin with the raw amino-acid sequence, 213 residues long: Negative modulator of initiation of replication (213 aa).

3 interaction with DNA regions span residues 116-117 (AV), 145-149 (RTRVY), and 179-185 (NTNSGRK).

Belongs to the SeqA family. In terms of assembly, homodimer. Polymerizes to form helical filaments.

The protein localises to the cytoplasm. In terms of biological role, negative regulator of replication initiation, which contributes to regulation of DNA replication and ensures that replication initiation occurs exactly once per chromosome per cell cycle. Binds to pairs of hemimethylated GATC sequences in the oriC region, thus preventing assembly of replication proteins and re-initiation at newly replicated origins. Repression is relieved when the region becomes fully methylated. The protein is Negative modulator of initiation of replication of Haemophilus parainfluenzae (strain T3T1).